The sequence spans 207 residues: Nitrile hydratase subunit alpha (207 aa).

Fe(3+) is bound by residues C110, C113, S114, and C115. At C113 the chain carries Cysteine sulfinic acid (-SO2H). C115 bears the Cysteine sulfenic acid (-SOH) mark.

It belongs to the nitrile hydratase subunit alpha family. In terms of assembly, heterodimer of an alpha and a beta chain. It depends on Fe(3+) as a cofactor. Post-translationally, oxidation on Cys-113 is essential for the activity. In terms of processing, oxidation on Cys-115 stabilizes the Fe-NO ligand coordinated in the inactive form.

It carries out the reaction an aliphatic primary amide = an aliphatic nitrile + H2O. Inactivated by nitrosylation of the iron center in the dark and activated by photo-induced nitric oxide (NO) release. Inactivated by oxidation of Cys-115 to a sulfenic acid. Functionally, NHase catalyzes the hydration of various nitrile compounds to the corresponding amides. Industrial production of acrylamide is now being developed using some of the enzymes of this class. The sequence is that of Nitrile hydratase subunit alpha (nthA) from Rhodococcus erythropolis (Arthrobacter picolinophilus).